A 241-amino-acid chain; its full sequence is Homeobox protein TGIF2LX (241 aa).

Disordered regions lie at residues 1-58 (MEAA…GNLP) and 127-207 (GKGA…ELVS). The span at 10–39 (ETQSPVQKDSPAKTQSPAQDTSIMSRNNAD) shows a compositional bias: polar residues. The segment at residues 48-111 (EHKKKRKGNL…INARRRILPD (64 aa)) is a DNA-binding region (homeobox; TALE-type).

Belongs to the TALE/TGIF homeobox family.

It is found in the nucleus. May have a transcription role in testis. This Pan paniscus (Pygmy chimpanzee) protein is Homeobox protein TGIF2LX (TGIF2LX).